The following is a 130-amino-acid chain: Small ribosomal subunit protein uS8 (130 aa).

The protein belongs to the universal ribosomal protein uS8 family. Part of the 30S ribosomal subunit. Contacts proteins S5 and S12.

In terms of biological role, one of the primary rRNA binding proteins, it binds directly to 16S rRNA central domain where it helps coordinate assembly of the platform of the 30S subunit. The polypeptide is Small ribosomal subunit protein uS8 (Vibrio parahaemolyticus serotype O3:K6 (strain RIMD 2210633)).